The sequence spans 474 residues: tRNA-2-methylthio-N(6)-dimethylallyladenosine synthase (474 aa).

One can recognise an MTTase N-terminal domain in the interval 3–120 (KKLHIKTWGC…LPEMINSVRG (118 aa)). Cysteine 12, cysteine 49, cysteine 83, cysteine 157, cysteine 161, and cysteine 164 together coordinate [4Fe-4S] cluster. Residues 143–375 (RAEGPTAFVS…QERINQQAMA (233 aa)) form the Radical SAM core domain. The region spanning 378–441 (RRMLGTTQRI…PNSLRGKVVR (64 aa)) is the TRAM domain.

This sequence belongs to the methylthiotransferase family. MiaB subfamily. In terms of assembly, monomer. The cofactor is [4Fe-4S] cluster.

The protein localises to the cytoplasm. It catalyses the reaction N(6)-dimethylallyladenosine(37) in tRNA + (sulfur carrier)-SH + AH2 + 2 S-adenosyl-L-methionine = 2-methylsulfanyl-N(6)-dimethylallyladenosine(37) in tRNA + (sulfur carrier)-H + 5'-deoxyadenosine + L-methionine + A + S-adenosyl-L-homocysteine + 2 H(+). In terms of biological role, catalyzes the methylthiolation of N6-(dimethylallyl)adenosine (i(6)A), leading to the formation of 2-methylthio-N6-(dimethylallyl)adenosine (ms(2)i(6)A) at position 37 in tRNAs that read codons beginning with uridine. The chain is tRNA-2-methylthio-N(6)-dimethylallyladenosine synthase from Escherichia coli (strain SMS-3-5 / SECEC).